The chain runs to 664 residues: UvrABC system protein C (664 aa).

Positions 63–141 constitute a GIY-YIG domain; that stretch reads LRPGVYRMYD…IKRYRPPYNI (79 aa). A UVR domain is found at 254-289; that stretch reads THVQKKLVTAMEQASNDLNYELAAVYRDRLKALAFI.

The protein belongs to the UvrC family. In terms of assembly, interacts with UvrB in an incision complex.

It is found in the cytoplasm. Functionally, the UvrABC repair system catalyzes the recognition and processing of DNA lesions. UvrC both incises the 5' and 3' sides of the lesion. The N-terminal half is responsible for the 3' incision and the C-terminal half is responsible for the 5' incision. This chain is UvrABC system protein C, found in Zymomonas mobilis subsp. mobilis (strain ATCC 31821 / ZM4 / CP4).